Reading from the N-terminus, the 553-residue chain is HTH-type transcriptional regulator SgrR (553 aa).

Residues 1 to 113 (MSTSRLQQQF…RQMLLSQLGR (113 aa)) form the HTH marR-type domain. Positions 26 to 49 (LQALAEVLNCSRRHVRSLLGKMQH) form a DNA-binding region, H-T-H motif. The solute-binding stretch occupies residues 163 to 494 (ELEPDLSHHW…EELHQDIESW (332 aa)).

Activates the small RNA gene sgrS under glucose-phosphate stress conditions as well as yfdZ. Represses its own transcription under both stress and non-stress conditions. Might act as a sensor of the intracellular accumulation of phosphoglucose by binding these molecules in its C-terminal solute-binding domain. The protein is HTH-type transcriptional regulator SgrR of Yersinia pestis bv. Antiqua (strain Antiqua).